The chain runs to 164 residues: MLYCVQFGRRVIRLVSATVHGFFLTLLAMFKPKVTLRYPHEKGPLSTRFRGEHALRRYESGEERCIACKLCEAICPAQAITIEAEERSDGSRRTTRYDIDMTKCIYCGFCQEACPVDAIVEGPNFEYSTETREELMYNKEKLLANGDIWEEALRYRIKKNQPYY.

4Fe-4S ferredoxin-type domains follow at residues 56-85 (RRYE…IEAE) and 95-124 (TRYD…EGPN). 8 residues coordinate [4Fe-4S] cluster: Cys-65, Cys-68, Cys-71, Cys-75, Cys-104, Cys-107, Cys-110, and Cys-114.

This sequence belongs to the complex I 23 kDa subunit family. In terms of assembly, NDH-1 is composed of 14 different subunits. Subunits NuoA, H, J, K, L, M, N constitute the membrane sector of the complex. It depends on [4Fe-4S] cluster as a cofactor.

The protein resides in the cell inner membrane. It catalyses the reaction a quinone + NADH + 5 H(+)(in) = a quinol + NAD(+) + 4 H(+)(out). NDH-1 shuttles electrons from NADH, via FMN and iron-sulfur (Fe-S) centers, to quinones in the respiratory chain. The immediate electron acceptor for the enzyme in this species is believed to be ubiquinone. Couples the redox reaction to proton translocation (for every two electrons transferred, four hydrogen ions are translocated across the cytoplasmic membrane), and thus conserves the redox energy in a proton gradient. The polypeptide is NADH-quinone oxidoreductase subunit I (Anaplasma phagocytophilum (strain HZ)).